Consider the following 401-residue polypeptide: Phosphoglycerate kinase (401 aa).

Substrate contacts are provided by residues 23-25 (DLN), Arg-38, 61-64 (HFGR), Arg-120, and Arg-153. ATP-binding positions include Lys-203, Glu-325, and 355-358 (GGDT).

The protein belongs to the phosphoglycerate kinase family. As to quaternary structure, monomer.

It localises to the cytoplasm. The catalysed reaction is (2R)-3-phosphoglycerate + ATP = (2R)-3-phospho-glyceroyl phosphate + ADP. It functions in the pathway carbohydrate degradation; glycolysis; pyruvate from D-glyceraldehyde 3-phosphate: step 2/5. This chain is Phosphoglycerate kinase, found in Rhizobium johnstonii (strain DSM 114642 / LMG 32736 / 3841) (Rhizobium leguminosarum bv. viciae).